The primary structure comprises 180 residues: Crossover junction endodeoxyribonuclease RuvC (180 aa).

Active-site residues include D7, E66, and D138. Mg(2+) contacts are provided by D7, E66, and D138.

This sequence belongs to the RuvC family. In terms of assembly, homodimer which binds Holliday junction (HJ) DNA. The HJ becomes 2-fold symmetrical on binding to RuvC with unstacked arms; it has a different conformation from HJ DNA in complex with RuvA. In the full resolvosome a probable DNA-RuvA(4)-RuvB(12)-RuvC(2) complex forms which resolves the HJ. Mg(2+) serves as cofactor.

It is found in the cytoplasm. It catalyses the reaction Endonucleolytic cleavage at a junction such as a reciprocal single-stranded crossover between two homologous DNA duplexes (Holliday junction).. In terms of biological role, the RuvA-RuvB-RuvC complex processes Holliday junction (HJ) DNA during genetic recombination and DNA repair. Endonuclease that resolves HJ intermediates. Cleaves cruciform DNA by making single-stranded nicks across the HJ at symmetrical positions within the homologous arms, yielding a 5'-phosphate and a 3'-hydroxyl group; requires a central core of homology in the junction. The consensus cleavage sequence is 5'-(A/T)TT(C/G)-3'. Cleavage occurs on the 3'-side of the TT dinucleotide at the point of strand exchange. HJ branch migration catalyzed by RuvA-RuvB allows RuvC to scan DNA until it finds its consensus sequence, where it cleaves and resolves the cruciform DNA. This chain is Crossover junction endodeoxyribonuclease RuvC, found in Burkholderia vietnamiensis (strain G4 / LMG 22486) (Burkholderia cepacia (strain R1808)).